Reading from the N-terminus, the 120-residue chain is Ribonuclease P protein component 4 (120 aa).

Cys67, Cys70, Cys96, and Cys99 together coordinate Zn(2+).

Belongs to the eukaryotic/archaeal RNase P protein component 4 family. As to quaternary structure, consists of a catalytic RNA component and at least 4-5 protein subunits. Zn(2+) is required as a cofactor.

It is found in the cytoplasm. It carries out the reaction Endonucleolytic cleavage of RNA, removing 5'-extranucleotides from tRNA precursor.. In terms of biological role, part of ribonuclease P, a protein complex that generates mature tRNA molecules by cleaving their 5'-ends. This is Ribonuclease P protein component 4 from Thermococcus sibiricus (strain DSM 12597 / MM 739).